A 459-amino-acid polypeptide reads, in one-letter code: Zinc finger protein 213 (459 aa).

Residues 45–126 (RQRFRQFCYG…VALVEDLQKQ (82 aa)) enclose the SCAN box domain. The disordered stretch occupies residues 128–188 (VKAWRQDVPS…ALLKEGRPGE (61 aa)). Residues 202-292 (VALGDIPFYF…ENRPRAALGP (91 aa)) form the KRAB domain. 5 C2H2-type zinc fingers span residues 317–339 (HSCG…QRTH), 345–367 (HKCP…QGVH), 373–395 (FSCS…QRIH), 401–423 (FGCS…RRVH), and 429–451 (FGCG…QSLH).

Belongs to the krueppel C2H2-type zinc-finger protein family. Widely expressed with highest levels in testis.

Its subcellular location is the nucleus. In terms of biological role, may be involved in transcriptional regulation. The polypeptide is Zinc finger protein 213 (ZNF213) (Homo sapiens (Human)).